We begin with the raw amino-acid sequence, 400 residues long: MENPIKPVATRSIGIAVVLLVVGIVIGFAVGHYTVATAPSKPAINTFAAGSLKYALGNDFNPQYTNLTGVRVGMTFSGSISGAREVQEGKNYSVFISASAPILYQDLMNDTHYASWQIIFSANEMAITWTNPKYSILPSWPYWFENITENSTIVAASNASLDPSGFQAIETMKLAGLLYTGWDNSSILVGNEPVSYYVRLAFDDNFAMYMNYNKAYNDWFHGQFGYPVNDSLALYHQIFISKYLNGTTKLTTVEIGLDGYLTAGTADYALTYVSQAINQGLSYYENSTGGNGLPAWINLGSVNKTIDDFYEQINESGPAWDNVGNLPGAPIFYSITVISNYTNPYAIQYVYDLITGLGQHYLSMSKFDPLAQPFYVGDVPAQLKPLVVAPPSYLPVSSYD.

A signal peptide spans 1 to 31 (MENPIKPVATRSIGIAVVLLVVGIVIGFAVG).

The protein belongs to the bacterial solute-binding protein 1 family. WtpA subfamily.

This is an uncharacterized protein from Thermoplasma acidophilum (strain ATCC 25905 / DSM 1728 / JCM 9062 / NBRC 15155 / AMRC-C165).